A 122-amino-acid chain; its full sequence is Biogenesis of lysosome-related organelles complex 1 subunit BLS1 (122 aa).

Serine 33 carries the post-translational modification Phosphoserine.

Belongs to the BLOC1S1 family. In terms of assembly, component of the biogenesis of lysosome-related organelles complex-1 (BLOC-1) composed of at least BLI1, BLS1, CNL1, KXD1, SNN1 and VAB2.

Its subcellular location is the endosome. Component of the biogenesis of lysosome-related organelles complex-1 (BLOC-1), a complex involved in endosomal cargo sorting. In Saccharomyces cerevisiae (strain RM11-1a) (Baker's yeast), this protein is Biogenesis of lysosome-related organelles complex 1 subunit BLS1 (BLS1).